We begin with the raw amino-acid sequence, 412 residues long: Cytochrome P450-SOY (412 aa).

Residues 1 to 25 show a composition bias toward polar residues; sequence MTESTTDPARQNLDPTSPAPATSFP. Positions 1–38 are disordered; that stretch reads MTESTTDPARQNLDPTSPAPATSFPQDRGCPYHPPAGY. A heme-binding site is contributed by Cys361.

Belongs to the cytochrome P450 family. It depends on heme as a cofactor.

The protein localises to the cytoplasm. This is Cytochrome P450-SOY (cyp105D1) from Streptomyces griseus.